The sequence spans 153 residues: Histone H2A (153 aa).

2 disordered regions span residues 1-27 (MDTGAKLKKGAGERKGGGPKKKPVSRS) and 131-153 (KAAAAATKEPKSPAKATKSPKKA). The segment covering 132 to 147 (AAAAATKEPKSPAKAT) has biased composition (low complexity). An SPKK motif motif is present at residues 149–152 (SPKK).

It belongs to the histone H2A family. As to quaternary structure, the nucleosome is a histone octamer containing two molecules each of H2A, H2B, H3 and H4 assembled in one H3-H4 heterotetramer and two H2A-H2B heterodimers. The octamer wraps approximately 147 bp of DNA.

It localises to the nucleus. It is found in the chromosome. Its function is as follows. Core component of nucleosome. Nucleosomes wrap and compact DNA into chromatin, limiting DNA accessibility to the cellular machineries which require DNA as a template. Histones thereby play a central role in transcription regulation, DNA repair, DNA replication and chromosomal stability. DNA accessibility is regulated via a complex set of post-translational modifications of histones, also called histone code, and nucleosome remodeling. The protein is Histone H2A of Euphorbia esula (Leafy spurge).